The primary structure comprises 139 residues: Putative nickel-responsive regulator (139 aa).

Residues His-79, His-90, His-92, and Cys-98 each coordinate Ni(2+).

This sequence belongs to the transcriptional regulatory CopG/NikR family. It depends on Ni(2+) as a cofactor.

Functionally, transcriptional regulator. This is Putative nickel-responsive regulator from Geotalea uraniireducens (strain Rf4) (Geobacter uraniireducens).